A 1997-amino-acid chain; its full sequence is Otoferlin (1997 aa).

The C2 1 domain occupies 1-98 (MALIVHLKTV…VEENRVEVTD (98 aa)). The Cytoplasmic segment spans residues 1–1963 (MALIVHLKTV…ARYFLWHTYR (1963 aa)). A disordered region spans residues 140–167 (QEEKDSQETDGLLPGSRPSTRISGEKSF). C2 domains lie at 235–356 (KRSK…HKWA) and 399–530 (IEGN…FLPT). The interval 643 to 692 (VDGMSRPLRPRPRKEPGDEEEVDLIQNSSDDEGDEAGDLASVSSTPPMRP) is disordered. The segment covering 659–679 (GDEEEVDLIQNSSDDEGDEAG) has biased composition (acidic residues). The stretch at 791–820 (RERLKSCMRELESMGQQAKSLRAQVKRHTV) forms a coiled coil. C2 domains are found at residues 943 to 1068 (LHSF…PPRF) and 1115 to 1241 (RGPI…PNWN). Positions 975, 981, 1037, 1039, and 1045 each coordinate Ca(2+). Disordered regions lie at residues 1253-1272 (LRNGGPSSRPTGEVVVSMEP), 1296-1326 (DVAEDEKERKKKKKKGPSEEPEEEEPDESML), and 1343-1402 (LRQH…EKKK). Composition is skewed to acidic residues over residues 1314–1325 (EEPEEEEPDESM) and 1352–1361 (DLEEKEEMES). Residues 1370–1383 (KSKEKSRAAKEEKK) show a composition bias toward basic and acidic residues. C2 domains follow at residues 1464–1593 (LPED…ATCG) and 1714–1865 (DMPA…KQCT). Residues D1508, D1514, D1563, D1565, D1571, D1836, S1839, and D1842 each coordinate Ca(2+). Residues 1964–1984 (WLLLKFLLLFLLLLLFALFLY) form a helical membrane-spanning segment. Residues 1985–1997 (SLPGYLAKKILGA) lie on the Extracellular side of the membrane.

It belongs to the ferlin family. As to quaternary structure, interacts with SNAP25; the interaction is direct. Interacts with STX1; the interaction is direct. Interacts with RAB8B. Requires Ca(2+) as cofactor. As to expression, isoform 1 is expressed in cochlea and brain. Expressed in the cochlear and vestibular hair cells. Expressed in both inner and outer hair cells (IHCs and OHCs) and cochlear ganglions neurons at postnatal day 2 (P2) and 6 (P6). Expressed only in IHCs at postnatal day 60 (P60) (at protein level). Strongly expressed in brain and inner ear. In the inner ear, it is mainly expressed in the cochlear IHC and vestibular type I sensory hair cells. Weakly expressed in eye, heart, skeletal muscle, liver, kidney, lung and testis.

It is found in the cytoplasmic vesicle. Its subcellular location is the secretory vesicle. The protein resides in the synaptic vesicle membrane. The protein localises to the basolateral cell membrane. It localises to the endoplasmic reticulum membrane. It is found in the golgi apparatus membrane. Its subcellular location is the presynaptic cell membrane. The protein resides in the cell membrane. In terms of biological role, key calcium ion sensor involved in the Ca(2+)-triggered synaptic vesicle-plasma membrane fusion and in the control of neurotransmitter release at these output synapses. Interacts in a calcium-dependent manner to the presynaptic SNARE proteins at ribbon synapses of cochlear inner hair cells (IHCs) to trigger exocytosis of neurotransmitter. Also essential to synaptic exocytosis in immature outer hair cells (OHCs). May also play a role within the recycling of endosomes. In Mus musculus (Mouse), this protein is Otoferlin (Otof).